A 400-amino-acid polypeptide reads, in one-letter code: Aspartate/prephenate aminotransferase (400 aa).

L-aspartate contacts are provided by G39, W125, and N175. K239 carries the N6-(pyridoxal phosphate)lysine modification. R375 lines the L-aspartate pocket.

This sequence belongs to the class-I pyridoxal-phosphate-dependent aminotransferase family. As to quaternary structure, homodimer. It depends on pyridoxal 5'-phosphate as a cofactor.

The protein resides in the cytoplasm. It carries out the reaction L-aspartate + 2-oxoglutarate = oxaloacetate + L-glutamate. The catalysed reaction is L-arogenate + 2-oxoglutarate = prephenate + L-glutamate. Functionally, catalyzes the reversible conversion of aspartate and 2-oxoglutarate to glutamate and oxaloacetate. Can also transaminate prephenate in the presence of glutamate. Required for symbiotic nitrogen fixation. The protein is Aspartate/prephenate aminotransferase of Rhizobium meliloti (strain 1021) (Ensifer meliloti).